Reading from the N-terminus, the 124-residue chain is Small ribosomal subunit protein uS12 (124 aa).

Residues 105-124 are disordered; the sequence is QGVKNRKQARSRYGAKKEKG. The span at 108-118 shows a compositional bias: basic residues; that stretch reads KNRKQARSRYG.

This sequence belongs to the universal ribosomal protein uS12 family. As to quaternary structure, part of the 30S ribosomal subunit. Contacts proteins S8 and S17. May interact with IF1 in the 30S initiation complex.

With S4 and S5 plays an important role in translational accuracy. In terms of biological role, interacts with and stabilizes bases of the 16S rRNA that are involved in tRNA selection in the A site and with the mRNA backbone. Located at the interface of the 30S and 50S subunits, it traverses the body of the 30S subunit contacting proteins on the other side and probably holding the rRNA structure together. The combined cluster of proteins S8, S12 and S17 appears to hold together the shoulder and platform of the 30S subunit. This Mycobacterium bovis (strain ATCC BAA-935 / AF2122/97) protein is Small ribosomal subunit protein uS12 (rpsL).